The chain runs to 188 residues: Elongation factor P (188 aa).

Lys34 bears the N6-(3,6-diaminohexanoyl)-5-hydroxylysine mark.

It belongs to the elongation factor P family. Post-translationally, may be beta-lysylated on the epsilon-amino group of Lys-34 by the combined action of EpmA and EpmB, and then hydroxylated on the C5 position of the same residue by EpmC (if this protein is present). Lysylation is critical for the stimulatory effect of EF-P on peptide-bond formation. The lysylation moiety may extend toward the peptidyltransferase center and stabilize the terminal 3-CCA end of the tRNA. Hydroxylation of the C5 position on Lys-34 may allow additional potential stabilizing hydrogen-bond interactions with the P-tRNA.

Its subcellular location is the cytoplasm. It functions in the pathway protein biosynthesis; polypeptide chain elongation. Functionally, involved in peptide bond synthesis. Alleviates ribosome stalling that occurs when 3 or more consecutive Pro residues or the sequence PPG is present in a protein, possibly by augmenting the peptidyl transferase activity of the ribosome. Modification of Lys-34 is required for alleviation. The protein is Elongation factor P of Actinobacillus pleuropneumoniae serotype 5b (strain L20).